The sequence spans 203 residues: FMN-dependent NADH:quinone oxidoreductase (203 aa).

FMN-binding positions include Ser-9, 15-17 (SVS), and 138-141 (SRGG).

The protein belongs to the azoreductase type 1 family. As to quaternary structure, homodimer. FMN serves as cofactor.

It carries out the reaction 2 a quinone + NADH + H(+) = 2 a 1,4-benzosemiquinone + NAD(+). The enzyme catalyses N,N-dimethyl-1,4-phenylenediamine + anthranilate + 2 NAD(+) = 2-(4-dimethylaminophenyl)diazenylbenzoate + 2 NADH + 2 H(+). In terms of biological role, quinone reductase that provides resistance to thiol-specific stress caused by electrophilic quinones. Functionally, also exhibits azoreductase activity. Catalyzes the reductive cleavage of the azo bond in aromatic azo compounds to the corresponding amines. This is FMN-dependent NADH:quinone oxidoreductase from Methylorubrum extorquens (strain CM4 / NCIMB 13688) (Methylobacterium extorquens).